Here is a 220-residue protein sequence, read N- to C-terminus: 7-cyano-7-deazaguanine synthase (220 aa).

ATP is bound at residue 10 to 20 (FSGGQDSTTCL). Cysteine 186, cysteine 195, cysteine 198, and cysteine 201 together coordinate Zn(2+).

It belongs to the QueC family. In terms of assembly, homodimer. It depends on Zn(2+) as a cofactor.

The catalysed reaction is 7-carboxy-7-deazaguanine + NH4(+) + ATP = 7-cyano-7-deazaguanine + ADP + phosphate + H2O + H(+). The protein operates within purine metabolism; 7-cyano-7-deazaguanine biosynthesis. In terms of biological role, catalyzes the ATP-dependent conversion of 7-carboxy-7-deazaguanine (CDG) to 7-cyano-7-deazaguanine (preQ(0)). The protein is 7-cyano-7-deazaguanine synthase of Bacillus anthracis (strain A0248).